The primary structure comprises 147 residues: MVHLTGEEKSAVTALWGKVNVDEVGGEALGRLLVVYPWTQRFFESFGDLSTPDAVMNNPKVKAHGKKVLGAFSDGLTHLDNLKGTFAHLSELHCDKLHVDPENFRLLGNVLVCVLAHHFGKEFTPVVQAAYQKVVAGVANALAHKYH.

Valine 2 bears the N-acetylvaline mark. One can recognise a Globin domain in the interval histidine 3–histidine 147. At threonine 13 the chain carries Phosphothreonine. Position 45 is a phosphoserine (serine 45). Position 60 is an N6-acetyllysine (lysine 60). Histidine 64 contributes to the heme b binding site. Position 83 is an N6-acetyllysine (lysine 83). A heme b-binding site is contributed by histidine 93. Residue cysteine 94 is modified to S-nitrosocysteine. Lysine 145 is modified (N6-acetyllysine).

Belongs to the globin family. As to quaternary structure, heterotetramer of two alpha chains and two beta chains. Red blood cells.

Functionally, involved in oxygen transport from the lung to the various peripheral tissues. This chain is Hemoglobin subunit beta (HBB), found in Callithrix jacchus (White-tufted-ear marmoset).